We begin with the raw amino-acid sequence, 183 residues long: Holliday junction branch migration complex subunit RuvA (183 aa).

Positions 1–63 (MIVGLIGVVE…EDANLLYGFL (63 aa)) are domain I. Residues 64-139 (EESEKILFER…FFIQDENRPA (76 aa)) are domain II. Residue Ala139 is a region of interest, flexible linker. A domain III region spans residues 139 to 183 (ARNEVFLALESLGFKSAEINKVLKTLKPNLSIEAAIKEALQQLRS).

Belongs to the RuvA family. As to quaternary structure, homotetramer. Forms an RuvA(8)-RuvB(12)-Holliday junction (HJ) complex. HJ DNA is sandwiched between 2 RuvA tetramers; dsDNA enters through RuvA and exits via RuvB. An RuvB hexamer assembles on each DNA strand where it exits the tetramer. Each RuvB hexamer is contacted by two RuvA subunits (via domain III) on 2 adjacent RuvB subunits; this complex drives branch migration. In the full resolvosome a probable DNA-RuvA(4)-RuvB(12)-RuvC(2) complex forms which resolves the HJ.

It localises to the cytoplasm. Its function is as follows. The RuvA-RuvB-RuvC complex processes Holliday junction (HJ) DNA during genetic recombination and DNA repair, while the RuvA-RuvB complex plays an important role in the rescue of blocked DNA replication forks via replication fork reversal (RFR). RuvA specifically binds to HJ cruciform DNA, conferring on it an open structure. The RuvB hexamer acts as an ATP-dependent pump, pulling dsDNA into and through the RuvAB complex. HJ branch migration allows RuvC to scan DNA until it finds its consensus sequence, where it cleaves and resolves the cruciform DNA. The sequence is that of Holliday junction branch migration complex subunit RuvA from Helicobacter pylori (strain HPAG1).